The sequence spans 446 residues: GTPase Der (446 aa).

EngA-type G domains are found at residues 3-167 (PVLA…AFDE) and 180-353 (IRLA…ASAT). Residues 9–16 (GRPNVGKS), 56–60 (DTGGF), 119–122 (NKAE), 186–193 (GRPNVGKS), 233–237 (DTAGL), and 298–301 (NKWD) each bind GTP. Positions 354-438 (KKLATPVLTR…PMRIEMKSSR (85 aa)) constitute a KH-like domain.

Belongs to the TRAFAC class TrmE-Era-EngA-EngB-Septin-like GTPase superfamily. EngA (Der) GTPase family. As to quaternary structure, associates with the 50S ribosomal subunit.

GTPase that plays an essential role in the late steps of ribosome biogenesis. This Methylibium petroleiphilum (strain ATCC BAA-1232 / LMG 22953 / PM1) protein is GTPase Der.